A 232-amino-acid polypeptide reads, in one-letter code: BTB/POZ domain-containing protein KCTD11 (232 aa).

One can recognise a BTB domain in the interval methionine 1–arginine 49.

In terms of assembly, homopentamer. Interacts with KCTD6 and KCTD21; KCTD11 and KCTD6 or KCTD21 may associate in pentameric assemblies. Component of the BCR(KCTD11) E3 ubiquitin ligase complex, at least composed of CUL3 and KCTD11 and RBX1. Interacts (via BTB domain) with CUL3; initially a 4:4 stoichiometry has been reported, however, electron microscopy revealed pentameric states of the BTB domain. Weakly expressed in lung. In the cerebellum, higher expression in non proliferating external granule cells layer than in highly proliferating ones.

The protein operates within protein modification; protein ubiquitination. Functionally, plays a role as a marker and a regulator of neuronal differentiation; Up-regulated by a variety of neurogenic signals, such as retinoic acid, epidermal growth factor/EGF and NGFB/nerve growth factor. Induces apoptosis, growth arrest and the expression of cyclin-dependent kinase inhibitor CDKN1B. Plays a role as a tumor repressor and inhibits cell growth and tumorigenicity of medulloblastoma (MDB). Acts as a probable substrate-specific adapter for a BCR (BTB-CUL3-RBX1) E3 ubiquitin-protein ligase complex towards HDAC1. Functions as antagonist of the Hedgehog pathway on cell proliferation and differentiation by affecting the nuclear transfer of transcription factor GLI1, thus maintaining cerebellar granule cells in undifferentiated state, this effect probably occurs via HDAC1 down-regulation, keeping GLI1 acetylated and inactive. When knock-down, Hedgehog antagonism is impaired and proliferation of granule cells is sustained. Activates the caspase cascade. The protein is BTB/POZ domain-containing protein KCTD11 (Kctd11) of Mus musculus (Mouse).